A 94-amino-acid chain; its full sequence is Large ribosomal subunit protein eL14 (94 aa).

The protein belongs to the eukaryotic ribosomal protein eL14 family.

This chain is Large ribosomal subunit protein eL14, found in Methanopyrus kandleri (strain AV19 / DSM 6324 / JCM 9639 / NBRC 100938).